Reading from the N-terminus, the 1460-residue chain is Centrosomal protein of 164 kDa (1460 aa).

Residues 1–194 (MAGRPLRIGD…PSQGLKTSAY (194 aa)) are interaction with ATRIP. One can recognise a WW domain in the interval 56–89 (APLPGEWKPCQDITGDIYYFNFANGQSMWDHPCD). A disordered region spans residues 107–135 (GAIKKKKKKKEKKDKKDRDPPKSSLALGS). Residues 109–119 (IKKKKKKKEKK) show a composition bias toward basic residues. At S186 the chain carries Phosphoserine; by ATR and ATM. The residue at position 201 (S201) is a Phosphoserine. Disordered regions lie at residues 213–412 (GLGE…HGLD), 440–593 (AQQP…AALK), and 658–719 (EEAR…QKNR). Residues 217-227 (ETNEEDEEESD) show a composition bias toward acidic residues. Residues 256–270 (ESLRTSQPEEKKDVS) are compositionally biased toward basic and acidic residues. Positions 285 to 296 (SSPGADSSLSSA) are enriched in low complexity. Basic and acidic residues-rich tracts occupy residues 310–323 (LPEK…EPKI) and 357–367 (EGSRREEAAKE). Residues 453-464 (QSSQDELQSKQS) are compositionally biased toward low complexity. The segment covering 465 to 481 (KGLEERLSPPLPHEERA) has biased composition (basic and acidic residues). Residues 514–525 (SAASLSLQLSLQ) show a composition bias toward low complexity. Residues 537 to 546 (EKGKEQHSQA) are compositionally biased toward basic and acidic residues. Residue S566 is modified to Phosphoserine. Basic and acidic residues-rich tracts occupy residues 658–668 (EEARMREEESQ) and 686–719 (DQIR…QKNR). Residues 1154-1206 (GIKALEDMRKNLEKETRHLDEMKSAMRKGHNLLKKKEEKLNQLESSLWEEASD) are a coiled coil. Residues 1290-1310 (PPPLLASMPAQLPPRDPKSTP) form a disordered region. Phosphoserine is present on residues S1386, S1388, and S1443.

As to quaternary structure, interacts (via N-terminus) with ATRIP. Interacts with ATM, ATR and MDC1. Interacts with XPA (via N-terminus) upon UV irradiation. Interacts with CEP83, CCDC92, TTBK2, DVL3, NPHP3 and weakly with NPHP4. Interacts with DZIP1. Phosphorylation at Ser-186 is induced upon DNA-damage caused by treatment with IR irradiation, UV irradiation, hydroxyurea or amphidicolin. Also MDC1-mediated chromatin remodeling is critical for DNA damage-induced phosphorylation. As to expression, expressed in several cell lines.

The protein resides in the cytoplasm. The protein localises to the cytoskeleton. It localises to the microtubule organizing center. Its subcellular location is the centrosome. It is found in the centriole. The protein resides in the nucleus. In terms of biological role, plays a role in microtubule organization and/or maintenance for the formation of primary cilia (PC), a microtubule-based structure that protrudes from the surface of epithelial cells. Plays a critical role in G2/M checkpoint and nuclear divisions. A key player in the DNA damage-activated ATR/ATM signaling cascade since it is required for the proper phosphorylation of H2AX, RPA, CHEK2 and CHEK1. Plays a critical role in chromosome segregation, acting as a mediator required for the maintenance of genomic stability through modulation of MDC1, RPA and CHEK1. The polypeptide is Centrosomal protein of 164 kDa (CEP164) (Homo sapiens (Human)).